A 367-amino-acid polypeptide reads, in one-letter code: UDP-N-acetylglucosamine--N-acetylmuramyl-(pentapeptide) pyrophosphoryl-undecaprenol N-acetylglucosamine transferase (367 aa).

UDP-N-acetyl-alpha-D-glucosamine contacts are provided by residues Thr-15–Gly-17, Asn-127, Arg-163, Ser-191, Ile-249, and Gln-294.

The protein belongs to the glycosyltransferase 28 family. MurG subfamily.

Its subcellular location is the cell inner membrane. The enzyme catalyses di-trans,octa-cis-undecaprenyl diphospho-N-acetyl-alpha-D-muramoyl-L-alanyl-D-glutamyl-meso-2,6-diaminopimeloyl-D-alanyl-D-alanine + UDP-N-acetyl-alpha-D-glucosamine = di-trans,octa-cis-undecaprenyl diphospho-[N-acetyl-alpha-D-glucosaminyl-(1-&gt;4)]-N-acetyl-alpha-D-muramoyl-L-alanyl-D-glutamyl-meso-2,6-diaminopimeloyl-D-alanyl-D-alanine + UDP + H(+). It participates in cell wall biogenesis; peptidoglycan biosynthesis. In terms of biological role, cell wall formation. Catalyzes the transfer of a GlcNAc subunit on undecaprenyl-pyrophosphoryl-MurNAc-pentapeptide (lipid intermediate I) to form undecaprenyl-pyrophosphoryl-MurNAc-(pentapeptide)GlcNAc (lipid intermediate II). This chain is UDP-N-acetylglucosamine--N-acetylmuramyl-(pentapeptide) pyrophosphoryl-undecaprenol N-acetylglucosamine transferase, found in Burkholderia mallei (strain NCTC 10247).